The following is a 206-amino-acid chain: Peptidyl-tRNA hydrolase (206 aa).

Tyr-19 lines the tRNA pocket. His-24 acts as the Proton acceptor in catalysis. Residues Tyr-70, Asn-72, and Asn-118 each coordinate tRNA.

The protein belongs to the PTH family. As to quaternary structure, monomer.

It localises to the cytoplasm. It carries out the reaction an N-acyl-L-alpha-aminoacyl-tRNA + H2O = an N-acyl-L-amino acid + a tRNA + H(+). Hydrolyzes ribosome-free peptidyl-tRNAs (with 1 or more amino acids incorporated), which drop off the ribosome during protein synthesis, or as a result of ribosome stalling. Its function is as follows. Catalyzes the release of premature peptidyl moieties from peptidyl-tRNA molecules trapped in stalled 50S ribosomal subunits, and thus maintains levels of free tRNAs and 50S ribosomes. The protein is Peptidyl-tRNA hydrolase of Prochlorococcus marinus (strain MIT 9313).